The primary structure comprises 337 residues: Phosphatidylglycerophosphate phosphatase PTPMT1 (337 aa).

The interval 1-20 (MYIKELTETDEEKRERSVED) is disordered. Residues Y55 and D133 each contribute to the substrate site. A Tyrosine-protein phosphatase domain is found at 73-220 (WWDRVAEFIL…VVEYYHVKVL (148 aa)). C164 serves as the catalytic Phosphocysteine intermediate. Positions 164-170 (CKAGRGR) match the Glucan phosphatase signature motif CXAGXGR motif. 165–170 (KAGRGR) provides a ligand contact to substrate.

The protein belongs to the protein-tyrosine phosphatase family. Non-receptor class dual specificity subfamily. In terms of tissue distribution, expressed in stems, roots, flowers, mature seeds and leaves.

It carries out the reaction O-phospho-L-seryl-[protein] + H2O = L-seryl-[protein] + phosphate. The enzyme catalyses O-phospho-L-threonyl-[protein] + H2O = L-threonyl-[protein] + phosphate. It catalyses the reaction O-phospho-L-tyrosyl-[protein] + H2O = L-tyrosyl-[protein] + phosphate. The catalysed reaction is a 1,2-diacyl-sn-glycero-3-phospho-(1'-sn-glycero-3'-phosphate) + H2O = a 1,2-diacyl-sn-glycero-3-phospho-(1'-sn-glycerol) + phosphate. The protein operates within phospholipid metabolism; phosphatidylglycerol biosynthesis; phosphatidylglycerol from CDP-diacylglycerol: step 2/2. In terms of biological role, exhibits phosphatidylglycerophosphate phosphatase activity. Involved in root growth and columella cells organization. May possess protein phosphatase activity. The protein is Phosphatidylglycerophosphate phosphatase PTPMT1 of Arabidopsis thaliana (Mouse-ear cress).